The sequence spans 530 residues: Dual specificity calcium/calmodulin-dependent 3',5'-cyclic nucleotide phosphodiesterase 1A (530 aa).

2 calmodulin-binding regions span residues 24–44 (TEKM…QLEK) and 114–137 (EKPR…MYRK). Positions 142-508 (VGLAYPEAVI…ERWKELAAQG (367 aa)) constitute a PDEase domain. Histidine 219 acts as the Proton donor in catalysis. Positions 223, 259, 260, and 366 each coordinate Zn(2+). Residue aspartate 260 participates in Mg(2+) binding. Disordered stretches follow at residues 450-471 (TKTP…NDGT) and 502-530 (KELA…ETHS). The segment covering 451-471 (KTPSYGASRRSNMKGTTNDGT) has biased composition (polar residues). The segment covering 510–530 (PDPHKNSDLVNAEEKHAETHS) has biased composition (basic and acidic residues).

The protein belongs to the cyclic nucleotide phosphodiesterase family. PDE1 subfamily. As to quaternary structure, homodimer. Interacts with YWHAZ. The cofactor is Zn(2+). Requires Mg(2+) as cofactor.

It carries out the reaction a nucleoside 3',5'-cyclic phosphate + H2O = a nucleoside 5'-phosphate + H(+). It catalyses the reaction 3',5'-cyclic GMP + H2O = GMP + H(+). The catalysed reaction is 3',5'-cyclic AMP + H2O = AMP + H(+). With respect to regulation, type I PDE are activated by the binding of calmodulin in the presence of Ca(2+). In terms of biological role, calcium/calmodulin-dependent cyclic nucleotide phosphodiesterase with a dual specificity for the second messengers cGMP and cAMP, which are key regulators of many important physiological processes. Has a higher efficiency with cGMP compared to cAMP. This Bos taurus (Bovine) protein is Dual specificity calcium/calmodulin-dependent 3',5'-cyclic nucleotide phosphodiesterase 1A.